Here is a 104-residue protein sequence, read N- to C-terminus: MAAKIRRDDEVIVLTGKDKGKRGKVKNVLSSGKVIVEGINLVKKHQKPVPALNQPGGIVEKEAAIQVSNVAIFNTATGKADRVGFRFEDGKKVRFFKSNSETIK.

This sequence belongs to the universal ribosomal protein uL24 family. Part of the 50S ribosomal subunit.

In terms of biological role, one of two assembly initiator proteins, it binds directly to the 5'-end of the 23S rRNA, where it nucleates assembly of the 50S subunit. Functionally, one of the proteins that surrounds the polypeptide exit tunnel on the outside of the subunit. The sequence is that of Large ribosomal subunit protein uL24 from Salmonella paratyphi A (strain ATCC 9150 / SARB42).